Here is a 488-residue protein sequence, read N- to C-terminus: Dipeptide and tripeptide permease A (488 aa).

At 1 to 35 (MSTANTPEDEQKPSLNAFKQPRAFYLIFSIELWER) the chain is on the cytoplasmic side. A helical transmembrane segment spans residues 36-56 (FGYYGLQGIMAVYLVKMLGMS). Residues 57 to 60 (EAEA) are Periplasmic-facing. A helical membrane pass occupies residues 61 to 81 (ITVFAAFTALVYGFVAIGGWL). At 82-90 (GDKILGTKR) the chain is on the cytoplasmic side. The chain crosses the membrane as a helical span at residues 91 to 111 (VIVLGAIVLAIGYAMVAFSDH). Residues 112–114 (DKD) are Periplasmic-facing. Residues 115–135 (MIYWGLATIAVGNGLFKANPS) traverse the membrane as a helical segment. Residues 136–154 (SLLATCYEKDDPQLDGAFT) are Cytoplasmic-facing. The chain crosses the membrane as a helical span at residues 155 to 175 (MYYMSINVGSFLSMLATPWLA). Residues 176–179 (ANYG) are Periplasmic-facing. Residues 180 to 200 (WDVAFALSVVGMLITLANFML) form a helical membrane-spanning segment. Over 201–219 (CRGWIKDKGSRPDFEPLNY) the chain is Cytoplasmic. The chain crosses the membrane as a helical span at residues 220-240 (LKLLLTLVGIVALTAVSTWLL). Residue histidine 241 is a topological domain, periplasmic. The helical transmembrane segment at 242-262 (NNEVATWSLAIISLGIILIFA) threads the bilayer. At 263–275 (RETFMMKGVARRK) the chain is on the cytoplasmic side. Residues 276 to 296 (MIVAFLLMVEAVVFFVLYDQM) form a helical membrane-spanning segment. The Periplasmic portion of the chain corresponds to 297–324 (PTSLNFFAIHNVEHAILGFSVEPEQFQS). A helical transmembrane segment spans residues 325–345 (LNPFWIMLASPLLAAIYNFMG). The Cytoplasmic portion of the chain corresponds to 346-353 (DKLPMPYK). Residues 354–374 (FTVGMFLSATAFLVLPLGASM) form a helical membrane-spanning segment. Residues 375–391 (ANEAGIVSSWWLVASYG) lie on the Periplasmic side of the membrane. A helical membrane pass occupies residues 392-412 (FQSIGELMISGLGLAMVAQLV). At 413–415 (PQR) the chain is on the cytoplasmic side. Residues 416-436 (LMGFIMGAWFLTSAAAAIIAG) traverse the membrane as a helical segment. Over 437–460 (KVASLMAVPEDVQNAHASLEIYSS) the chain is Periplasmic. The helical transmembrane segment at 461 to 481 (VFLQIGIVTGVIALLMLFTAP) threads the bilayer. Residues 482–488 (MLSKMTQ) are Cytoplasmic-facing.

It belongs to the major facilitator superfamily. Proton-dependent oligopeptide transporter (POT/PTR) (TC 2.A.17) family. DtpA subfamily.

Its subcellular location is the cell inner membrane. In terms of biological role, proton-dependent permease that transports di- and tripeptides. The protein is Dipeptide and tripeptide permease A of Proteus mirabilis (strain HI4320).